Consider the following 139-residue polypeptide: Small ribosomal subunit protein uS12m (139 aa).

The transit peptide at 1–29 directs the protein to the mitochondrion; sequence MSWPGLLYGLTTSLSRGLALAPQLWAARS.

This sequence belongs to the universal ribosomal protein uS12 family. Component of the mitochondrial ribosome small subunit (28S) which comprises a 12S rRNA and about 30 distinct proteins.

Its subcellular location is the mitochondrion. The polypeptide is Small ribosomal subunit protein uS12m (Mrps12) (Mus musculus (Mouse)).